The chain runs to 780 residues: Pumilio domain-containing protein C4G8.03c (780 aa).

3 disordered regions span residues 1–29 (MVNRDAYNELNLNKKSQETNRKPSPLSSY), 298–330 (LSHFPDHLDPSRIPSPYQPSSLQPLESRKLHSK), and 358–411 (NHHS…GKTV). The span at 298–307 (LSHFPDHLDP) shows a compositional bias: basic and acidic residues. Positions 311–322 (PSPYQPSSLQPL) are enriched in low complexity. A compositionally biased stretch (polar residues) spans 358 to 382 (NHHSSLSMDNDPTNVSTKNRNNQTV). Positions 435–778 (EKSDDLSNLL…HILAKLTSST (344 aa)) constitute a PUM-HD domain. Pumilio repeat units follow at residues 462-497 (GFLGHLSTICKDQYGCRYLQKLLDENPKVNASLFFP), 498-533 (EIRQSVVQLMIDPFGNYMCQKLFVYASREQKLSMLN), 534-569 (GIGEGIVDICSNLYGTRSMQNIIDKLTSNEQISLLL), 570-606 (KIIIPSLTTLACDNNGTHVLQKCIAKFPPEKLEPLFL), 607-642 (SMEENLITLATNRHGCCILQRCLDRTNGDIQERLVN), 643-678 (SIIKSCLLLVQNAYGNYLVQHVLELNIQPYTERIIE), 679-714 (KFFGNICKLSLQKFSSNAIEQCIRTASPSTREQMLQ), 715-752 (EFLSFPNIEQLLDDCYANYVMQRFLNVADESQKFLILR), and 753-780 (SISHVIPKIQNTRHGRHILAKLTSSTSS).

This chain is Pumilio domain-containing protein C4G8.03c, found in Schizosaccharomyces pombe (strain 972 / ATCC 24843) (Fission yeast).